Here is a 568-residue protein sequence, read N- to C-terminus: 2-succinyl-5-enolpyruvyl-6-hydroxy-3-cyclohexene-1-carboxylate synthase (568 aa).

It belongs to the TPP enzyme family. MenD subfamily. Homodimer. Mg(2+) serves as cofactor. Mn(2+) is required as a cofactor. It depends on thiamine diphosphate as a cofactor.

The catalysed reaction is isochorismate + 2-oxoglutarate + H(+) = 5-enolpyruvoyl-6-hydroxy-2-succinyl-cyclohex-3-ene-1-carboxylate + CO2. Its pathway is quinol/quinone metabolism; 1,4-dihydroxy-2-naphthoate biosynthesis; 1,4-dihydroxy-2-naphthoate from chorismate: step 2/7. The protein operates within quinol/quinone metabolism; menaquinone biosynthesis. In terms of biological role, catalyzes the thiamine diphosphate-dependent decarboxylation of 2-oxoglutarate and the subsequent addition of the resulting succinic semialdehyde-thiamine pyrophosphate anion to isochorismate to yield 2-succinyl-5-enolpyruvyl-6-hydroxy-3-cyclohexene-1-carboxylate (SEPHCHC). This Histophilus somni (strain 129Pt) (Haemophilus somnus) protein is 2-succinyl-5-enolpyruvyl-6-hydroxy-3-cyclohexene-1-carboxylate synthase.